A 197-amino-acid polypeptide reads, in one-letter code: dITP/XTP pyrophosphatase (197 aa).

Position 10–15 (10–15 (TKNQGK)) interacts with substrate. Asp-70 acts as the Proton acceptor in catalysis. Residue Asp-70 participates in Mg(2+) binding. Residues Ser-71, 151–154 (FGYD), Lys-173, and 178–179 (HR) each bind substrate.

This sequence belongs to the HAM1 NTPase family. As to quaternary structure, homodimer. Mg(2+) is required as a cofactor.

The catalysed reaction is XTP + H2O = XMP + diphosphate + H(+). It carries out the reaction dITP + H2O = dIMP + diphosphate + H(+). It catalyses the reaction ITP + H2O = IMP + diphosphate + H(+). In terms of biological role, pyrophosphatase that catalyzes the hydrolysis of nucleoside triphosphates to their monophosphate derivatives, with a high preference for the non-canonical purine nucleotides XTP (xanthosine triphosphate), dITP (deoxyinosine triphosphate) and ITP. Seems to function as a house-cleaning enzyme that removes non-canonical purine nucleotides from the nucleotide pool, thus preventing their incorporation into DNA/RNA and avoiding chromosomal lesions. The polypeptide is dITP/XTP pyrophosphatase (Symbiobacterium thermophilum (strain DSM 24528 / JCM 14929 / IAM 14863 / T)).